Here is a 160-residue protein sequence, read N- to C-terminus: Large ribosomal subunit protein eL29 (160 aa).

Positions Met1 to Ser26 are enriched in basic residues. Disordered regions lie at residues Met1–Gly34 and Arg115–Pro160. The residue at position 5 (Lys5) is an N6-methyllysine. Ser31 bears the Phosphoserine mark. At Lys33 the chain carries N6-acetyllysine. Low complexity predominate over residues Lys126–Pro160. 2 consecutive repeat copies span residues Ala127–Lys134 and Ala135–Gln142. A 2 X 8 AA tandem repeats of A-X-A-K-A-P-A-[KQ] region spans residues Ala127–Gln142. At Ser138 the chain carries Phosphoserine. Lys145 bears the N6-acetyllysine mark.

The protein belongs to the eukaryotic ribosomal protein eL29 family. As to quaternary structure, component of the large ribosomal subunit.

Its subcellular location is the cytoplasm. Functionally, component of the large ribosomal subunit. The ribosome is a large ribonucleoprotein complex responsible for the synthesis of proteins in the cell. The polypeptide is Large ribosomal subunit protein eL29 (Rpl29) (Mus musculus (Mouse)).